A 587-amino-acid chain; its full sequence is Pyruvate decarboxylase 3 (587 aa).

Substrate contacts are provided by D48 and H135. Positions D415–I496 are thiamine pyrophosphate binding. 3 residues coordinate Mg(2+): D464, N491, and G493. E497 is a binding site for substrate.

This sequence belongs to the TPP enzyme family. In terms of assembly, homotetramer. Requires a metal cation as cofactor. It depends on thiamine diphosphate as a cofactor.

It catalyses the reaction a 2-oxocarboxylate + H(+) = an aldehyde + CO2. The chain is Pyruvate decarboxylase 3 (PDC3) from Oryza sativa subsp. japonica (Rice).